Consider the following 584-residue polypeptide: MTRIKEFFTKLSESSTNQNISNIPKKKKKLFLALFATLLVVAAVIGIVAGVNSRKNSGDNGNEPHHAILKSSCSSTRYPDLCFSAIAAVPEASKKVTSQKDVIEMSLNITTTAVEHNYFGIQKLLKRTNLTKREKVALHDCLETIDETLDELHKAVEDLEEYPNKKSLSQHADDLKTLMSAAMTNQGTCLDGFSHDDANKHVRDALSDGQVHVEKMCSNALAMIKNMTDTDMMIMRTSNNRKLIEETSTVDGWPAWLSTGDRRLLQSSSVTPNVVVAADGSGNFKTVAASVAAAPQGGTKRYIIRIKAGVYRENVEVTKKHKNIMFIGDGRTRTIITGSRNVVDGSTTFKSATVAVVGEGFLARDITFQNTAGPSKHQAVALRVGADLSAFYNCDMLAYQDTLYVHSNRQFFVNCLIAGTVDFIFGNAAAVLQNCDIHARKPNSGQKNMVTAQGRADPNQNTGIVIQKSRIGATSDLKPVQGSFPTYLGRPWKEYSRTVIMQSSITDVIHPAGWHEWDGNFALNTLFYGEHQNAGAGAGTSGRVKWKGFRVITSATEAQAFTPGSFIAGSSWLGSTGFPFSLGL.

Residues 1 to 50 (MTRIKEFFTKLSESSTNQNISNIPKKKKKLFLALFATLLVVAAVIGIVAG) form the signal peptide. The propeptide occupies 51–266 (VNSRKNSGDN…LSTGDRRLLQ (216 aa)). N-linked (GlcNAc...) asparagine glycosylation is found at asparagine 108, asparagine 129, and asparagine 226. Positions 348 and 378 each coordinate substrate. Catalysis depends on aspartate 401, which acts as the Proton donor. Cysteine 415 and cysteine 435 form a disulfide bridge. The active-site Nucleophile is the aspartate 422. Substrate-binding residues include arginine 490 and tryptophan 492.

In the N-terminal section; belongs to the PMEI family. This sequence in the C-terminal section; belongs to the pectinesterase family. As to expression, in the peel, expression is localized to the region of the flavedo close to the oil glands, and to the innermost layer of the albedo. In the lamella, expression is localized to the cell layers opposing the fruit tissue, and to the parenchyma surrounding the vascular tissue. In the fruit vesicles, expression is restricted to the peripheral cell layers and stalk cells. High levels of expression are detected in the core matrix.

The protein resides in the secreted. Its subcellular location is the cell wall. It catalyses the reaction [(1-&gt;4)-alpha-D-galacturonosyl methyl ester](n) + n H2O = [(1-&gt;4)-alpha-D-galacturonosyl](n) + n methanol + n H(+). It participates in glycan metabolism; pectin degradation; 2-dehydro-3-deoxy-D-gluconate from pectin: step 1/5. In terms of biological role, acts in the modification of cell walls via demethylesterification of cell wall pectin. The polypeptide is Pectinesterase 3 (Citrus sinensis (Sweet orange)).